The chain runs to 328 residues: 3,4-dihydroxyphenylacetaldehyde synthase 2 (328 aa).

Residue asparagine 111 is part of the active site. Lysine 222 is modified (N6-(pyridoxal phosphate)lysine).

Belongs to the group II decarboxylase family. Pyridoxal 5'-phosphate is required as a cofactor.

It carries out the reaction L-dopa + O2 + H2O + H(+) = 3,4-dihydroxyphenylacetaldehyde + H2O2 + NH4(+) + CO2. Functionally, catalyzes the decarboxylation-oxidative deamination of L-3,4-dihydroxyphenylalanine (L-DOPA) to 3,4-dihydroxylphenylacetaldehyde (DHPAA). Involved in cuticle development. Probably responsible for the protein cross-linking during the development of flexible cuticles. This chain is 3,4-dihydroxyphenylacetaldehyde synthase 2 (amd), found in Drosophila simulans (Fruit fly).